A 568-amino-acid polypeptide reads, in one-letter code: Protein KATNIP homolog (568 aa).

Residues 1 to 20 show a composition bias toward basic and acidic residues; it reads MSDSDLKEIEKNAENIKLEP. The interval 1 to 30 is disordered; the sequence is MSDSDLKEIEKNAENIKLEPAEDEVNEEDQ. Residues 21–30 show a composition bias toward acidic residues; that stretch reads AEDEVNEEDQ.

As to expression, expressed in most ciliated neuronal cells. Not expressed in non-ciliated cells.

The protein resides in the cytoplasm. It is found in the cytoskeleton. The protein localises to the cilium axoneme. Its subcellular location is the cilium basal body. Functionally, may regulate ciliary A-tubule number and, along with arl-13, controls cilium integrity. The sequence is that of Protein KATNIP homolog from Caenorhabditis elegans.